Reading from the N-terminus, the 470-residue chain is Protein C-ets-2 (470 aa).

Positions 85–170 (ATFSGFKKEQ…EHLEQMIKEN (86 aa)) constitute a PNT domain. S225 is modified (phosphoserine). The segment at 270 to 291 (ASGKPRDHDSAETGGDSFESSE) is disordered. S296, S299, and S302 each carry phosphoserine. Residues 364 to 444 (IQLWQFLLEL…SGKRYVYRFV (81 aa)) constitute a DNA-binding region (ETS).

It belongs to the ETS family. In terms of processing, phosphorylation by CDK10 at Ser-225 may create a phosphodegron that targets ETS2 for proteasomal degradation.

Its subcellular location is the nucleus. Transcription factor activating transcription. Binds specifically the GGA DNA motif in gene promoters and stimulates transcription of those genes. The polypeptide is Protein C-ets-2 (ETS2) (Bos taurus (Bovine)).